Here is a 97-residue protein sequence, read N- to C-terminus: Carboxysome shell protein CsoS1B (97 aa).

A BMC domain is found at 8 to 93 (ALGMIETRGL…PHKEVEPVLT (86 aa)).

This sequence belongs to the bacterial microcompartments protein family. CsoS1 subfamily. As to quaternary structure, homohexamer with a small central pore.

The protein resides in the carboxysome. One of shell proteins of the carboxysome, a polyhedral inclusion where RuBisCO (ribulose bisphosphate carboxylase, ccbL-ccbS) is sequestered. Assembles into hexamers which make sheets that form the facets of the polyhedral carboxysome. The shell probably limits the diffusion of CO(2) into and out of the carboxysome. This is Carboxysome shell protein CsoS1B from Hydrogenovibrio crunogenus (strain DSM 25203 / XCL-2) (Thiomicrospira crunogena).